A 601-amino-acid polypeptide reads, in one-letter code: Glutathione-regulated potassium-efflux system protein KefB (601 aa).

13 consecutive transmembrane segments (helical) span residues 4–24 (SDFLLAGVLFLFAAVAAVPLA), 29–49 (IGAVLGYLLAGIAIGPWGLGF), 55–75 (EILHFSELGVVFLMFIIGLEL), 87–107 (IFGVGAAQVLLSAALLAGLLM), 115–135 (AAVVGGIGLAMSSTAMALQLM), 152–172 (VLLFQDLAVIPALALVPLLAG), 177–197 (HFDWMKVGMKVLAFVGMLIGG), 207–227 (FIAASGVREVFTAATLLLVLG), 230–250 (LFMDALGLSMALGTFIAGVLL), 268–288 (GLLLGLFFISVGMSLNLGVLY), 291–311 (LLWVVISVVVLVAVKILVLYL), 324–344 (MQFAGVLSQGGEFAFVLFSTA), and 356–376 (ALLLVTVTLSMMTTPLLMKLV). In terms of domain architecture, RCK N-terminal spans 400–519 (KPQVIVVGFG…AGVTQFSRET (120 aa)).

It belongs to the monovalent cation:proton antiporter 2 (CPA2) transporter (TC 2.A.37) family. KefB subfamily. Interacts with the regulatory subunit KefG.

Its subcellular location is the cell inner membrane. With respect to regulation, activated by adducts between glutathione and electrophiles. Its function is as follows. Pore-forming subunit of a potassium efflux system that confers protection against electrophiles. Catalyzes K(+)/H(+) antiport. This chain is Glutathione-regulated potassium-efflux system protein KefB, found in Escherichia coli (strain K12).